A 472-amino-acid polypeptide reads, in one-letter code: Transcriptional activator protein rec16 (472 aa).

A C2H2-type zinc finger spans residues 420–444 (FICCYCTKPFLSISKLQEHESSCSH).

Its subcellular location is the nucleus. Its function is as follows. Transcriptional activator that controls the onset of premeiotic DNA synthesis by regulating res2 and some other factor(s) in a mei2 independent cascade. This is Transcriptional activator protein rec16 (rec16) from Schizosaccharomyces pombe (strain 972 / ATCC 24843) (Fission yeast).